Reading from the N-terminus, the 572-residue chain is Proline--tRNA ligase (572 aa).

The protein belongs to the class-II aminoacyl-tRNA synthetase family. ProS type 1 subfamily. Homodimer.

Its subcellular location is the cytoplasm. The enzyme catalyses tRNA(Pro) + L-proline + ATP = L-prolyl-tRNA(Pro) + AMP + diphosphate. Catalyzes the attachment of proline to tRNA(Pro) in a two-step reaction: proline is first activated by ATP to form Pro-AMP and then transferred to the acceptor end of tRNA(Pro). As ProRS can inadvertently accommodate and process non-cognate amino acids such as alanine and cysteine, to avoid such errors it has two additional distinct editing activities against alanine. One activity is designated as 'pretransfer' editing and involves the tRNA(Pro)-independent hydrolysis of activated Ala-AMP. The other activity is designated 'posttransfer' editing and involves deacylation of mischarged Ala-tRNA(Pro). The misacylated Cys-tRNA(Pro) is not edited by ProRS. In Pectobacterium atrosepticum (strain SCRI 1043 / ATCC BAA-672) (Erwinia carotovora subsp. atroseptica), this protein is Proline--tRNA ligase.